We begin with the raw amino-acid sequence, 466 residues long: Soluble pyridine nucleotide transhydrogenase (466 aa).

36 to 45 (ERYQNVGGGC) is an FAD binding site.

This sequence belongs to the class-I pyridine nucleotide-disulfide oxidoreductase family. Requires FAD as cofactor.

Its subcellular location is the cytoplasm. The catalysed reaction is NAD(+) + NADPH = NADH + NADP(+). Functionally, conversion of NADPH, generated by peripheral catabolic pathways, to NADH, which can enter the respiratory chain for energy generation. The polypeptide is Soluble pyridine nucleotide transhydrogenase (Escherichia coli O9:H4 (strain HS)).